A 236-amino-acid polypeptide reads, in one-letter code: Phosphoribosylaminoimidazole-succinocarboxamide synthase (236 aa).

This sequence belongs to the SAICAR synthetase family.

It catalyses the reaction 5-amino-1-(5-phospho-D-ribosyl)imidazole-4-carboxylate + L-aspartate + ATP = (2S)-2-[5-amino-1-(5-phospho-beta-D-ribosyl)imidazole-4-carboxamido]succinate + ADP + phosphate + 2 H(+). The protein operates within purine metabolism; IMP biosynthesis via de novo pathway; 5-amino-1-(5-phospho-D-ribosyl)imidazole-4-carboxamide from 5-amino-1-(5-phospho-D-ribosyl)imidazole-4-carboxylate: step 1/2. In Rickettsia akari (strain Hartford), this protein is Phosphoribosylaminoimidazole-succinocarboxamide synthase.